A 388-amino-acid polypeptide reads, in one-letter code: Processive diacylglycerol beta-glucosyltransferase (388 aa).

It belongs to the glycosyltransferase 28 family. UgtP subfamily.

Its subcellular location is the cell membrane. The catalysed reaction is a 1,2-diacyl-3-O-(beta-D-glucopyranosyl)-sn-glycerol + UDP-alpha-D-glucose = a 1,2-diacyl-3-O-(beta-D-Glc-(1-&gt;6)-beta-D-Glc)-sn-glycerol + UDP + H(+). The enzyme catalyses a 1,2-diacyl-3-O-(beta-D-Glc-(1-&gt;6)-beta-D-Glc)-sn-glycerol + UDP-alpha-D-glucose = a 1,2-diacyl-3-O-(beta-D-Glc-(1-&gt;6)-beta-D-Glc-(1-&gt;6)-beta-D-Glc)-sn-glycerol + UDP + H(+). It catalyses the reaction a 1,2-diacyl-sn-glycerol + UDP-alpha-D-glucose = a 1,2-diacyl-3-O-(beta-D-glucopyranosyl)-sn-glycerol + UDP + H(+). Its pathway is glycolipid metabolism; diglucosyl-diacylglycerol biosynthesis. In terms of biological role, processive glucosyltransferase involved in the biosynthesis of both the bilayer- and non-bilayer-forming membrane glucolipids. Is able to successively transfer up to three glucosyl residues to diacylglycerol (DAG), thereby catalyzing the formation of beta-monoglucosyl-DAG (3-O-(beta-D-glucopyranosyl)-1,2-diacyl-sn-glycerol), beta-diglucosyl-DAG (3-O-(beta-D-glucopyranosyl-beta-(1-&gt;6)-D-glucopyranosyl)-1,2-diacyl-sn-glycerol) and beta-triglucosyl-DAG (3-O-(beta-D-glucopyranosyl-beta-(1-&gt;6)-D-glucopyranosyl-beta-(1-&gt;6)-D-glucopyranosyl)-1,2-diacyl-sn-glycerol). Beta-diglucosyl-DAG is the predominant glycolipid found in Bacillales and is also used as a membrane anchor for lipoteichoic acid (LTA). The polypeptide is Processive diacylglycerol beta-glucosyltransferase (Bacillus cereus (strain B4264)).